The following is a 141-amino-acid chain: Nucleoside diphosphate kinase (141 aa).

Positions 11, 59, 87, 93, 104, and 114 each coordinate ATP. His-117 functions as the Pros-phosphohistidine intermediate in the catalytic mechanism.

The protein belongs to the NDK family. In terms of assembly, homotetramer. Requires Mg(2+) as cofactor.

The protein localises to the cytoplasm. The catalysed reaction is a 2'-deoxyribonucleoside 5'-diphosphate + ATP = a 2'-deoxyribonucleoside 5'-triphosphate + ADP. The enzyme catalyses a ribonucleoside 5'-diphosphate + ATP = a ribonucleoside 5'-triphosphate + ADP. Major role in the synthesis of nucleoside triphosphates other than ATP. The ATP gamma phosphate is transferred to the NDP beta phosphate via a ping-pong mechanism, using a phosphorylated active-site intermediate. This Bdellovibrio bacteriovorus (strain ATCC 15356 / DSM 50701 / NCIMB 9529 / HD100) protein is Nucleoside diphosphate kinase.